A 224-amino-acid chain; its full sequence is Peroxiredoxin-6 (224 aa).

A Thioredoxin domain is found at 5-169 (LLLGDEAPNF…ILRVVDSLQL (165 aa)). The segment at 31 to 40 (DSWGILFSHP) is required and sufficient for targeting to lysosomes and lamellar bodies. Position 44 is a phosphothreonine (T44). The Cysteine sulfenic acid (-SOH) intermediate; for peroxidase activity role is filled by C47. K63 carries the N6-acetyllysine modification. Y89 carries the post-translational modification Phosphotyrosine. D140 serves as the catalytic For phospholipase activity. T177 is modified (phosphothreonine; by MAPK). Residue K209 is modified to N6-acetyllysine; alternate. K209 carries the post-translational modification N6-succinyllysine; alternate.

It belongs to the peroxiredoxin family. Prx6 subfamily. As to quaternary structure, homodimer. Interacts with GSTP1; mediates PRDX6 glutathionylation and regeneration. Interacts with APEX1. Interacts with STH. May interact with FAM168B. May interact with HTR2A. Post-translationally, phosphorylation at Thr-177 by MAP kinases increases the phospholipase activity of the enzyme. Phosphorylated form exhibits a greater lysophosphatidylcholine acyltransferase activity compared to the non-phosphorylated form. Irreversibly inactivated by overoxidation of Cys-47 to sulfinic acid (Cys-SO(2)H) and sulfonic acid (Cys-SO(3)H) forms upon oxidative stress.

It localises to the cytoplasm. Its subcellular location is the lysosome. The catalysed reaction is a hydroperoxide + 2 glutathione = an alcohol + glutathione disulfide + H2O. The enzyme catalyses a 1,2-diacyl-sn-glycero-3-phosphocholine + H2O = a 1-acyl-sn-glycero-3-phosphocholine + a fatty acid + H(+). It carries out the reaction a 1-acyl-sn-glycero-3-phosphocholine + an acyl-CoA = a 1,2-diacyl-sn-glycero-3-phosphocholine + CoA. It catalyses the reaction 1-hexadecanoyl-sn-glycero-3-phosphocholine + hexadecanoyl-CoA = 1,2-dihexadecanoyl-sn-glycero-3-phosphocholine + CoA. The catalysed reaction is 1,2-dihexadecanoyl-sn-glycero-3-phosphocholine + H2O = 1-hexadecanoyl-sn-glycero-3-phosphocholine + hexadecanoate + H(+). Thiol-specific peroxidase that catalyzes the reduction of hydrogen peroxide and organic hydroperoxides to water and alcohols, respectively. Can reduce H(2)O(2) and short chain organic, fatty acid, and phospholipid hydroperoxides. Also has phospholipase activity, can therefore either reduce the oxidized sn-2 fatty acyl group of phospholipids (peroxidase activity) or hydrolyze the sn-2 ester bond of phospholipids (phospholipase activity). These activities are dependent on binding to phospholipids at acidic pH and to oxidized phospholipds at cytosolic pH. Plays a role in cell protection against oxidative stress by detoxifying peroxides and in phospholipid homeostasis. Exhibits acyl-CoA-dependent lysophospholipid acyltransferase which mediates the conversion of lysophosphatidylcholine (1-acyl-sn-glycero-3-phosphocholine or LPC) into phosphatidylcholine (1,2-diacyl-sn-glycero-3-phosphocholine or PC). Shows a clear preference for LPC as the lysophospholipid and for palmitoyl CoA as the fatty acyl substrate. The polypeptide is Peroxiredoxin-6 (Prdx6) (Rattus norvegicus (Rat)).